The primary structure comprises 351 residues: MDKSKALEAALSQIERSFGKGSIMKLGSNENVVEIETISTGSLGLDIALGVGGLPRGRIIEIYGPESSGKTTLALQTIAEAQKKGGICAFVDAEHALDPVYARKLGVDLQNLLISQPDTGEQALEITDTLVRSGRVDVLVVDSVAALTPRAEIEGEMGDTVPGLQARLMSQALRKLTASISKSNTMVIFINQIRMKIGVMFGSPETTTGGNALKFYASVRLDIRRIGAVKEREEVIGNQTRVKVVKNKMAPPFKQVEFDIMYGEGVSKTGELVDLGVKAGIVEKSGAWFSYNSQRLGQGRENAKTFLRDNPDLAREIELSLRQNAGLIADRFLQNGGPDPDDGDGDATAEM.

An ATP-binding site is contributed by 64 to 71 (GPESSGKT). A disordered region spans residues 330-351 (DRFLQNGGPDPDDGDGDATAEM). Positions 339–351 (DPDDGDGDATAEM) are enriched in acidic residues.

Belongs to the RecA family.

Its subcellular location is the cytoplasm. Can catalyze the hydrolysis of ATP in the presence of single-stranded DNA, the ATP-dependent uptake of single-stranded DNA by duplex DNA, and the ATP-dependent hybridization of homologous single-stranded DNAs. It interacts with LexA causing its activation and leading to its autocatalytic cleavage. In Rhizobium leguminosarum bv. viciae, this protein is Protein RecA.